The sequence spans 399 residues: DNA primase DnaG (399 aa).

One can recognise a Toprim domain in the interval 182–268; that stretch reads DAIIVVEGRA…EVEDLTQKEI (87 aa). Glutamate 188, aspartate 230, and aspartate 232 together coordinate Mg(2+).

It belongs to the archaeal DnaG primase family. Forms a ternary complex with MCM helicase and DNA. Component of the archaeal exosome complex. It depends on Mg(2+) as a cofactor.

The enzyme catalyses ssDNA + n NTP = ssDNA/pppN(pN)n-1 hybrid + (n-1) diphosphate.. Its function is as follows. RNA polymerase that catalyzes the synthesis of short RNA molecules used as primers for DNA polymerase during DNA replication. Also part of the exosome, which is a complex involved in RNA degradation. Acts as a poly(A)-binding protein that enhances the interaction between heteromeric, adenine-rich transcripts and the exosome. In Archaeoglobus fulgidus (strain ATCC 49558 / DSM 4304 / JCM 9628 / NBRC 100126 / VC-16), this protein is DNA primase DnaG.